Reading from the N-terminus, the 525-residue chain is GMP synthase [glutamine-hydrolyzing] (525 aa).

The 199-residue stretch at 9–207 (RILILDFGSQ…VLQLCACEKL (199 aa)) folds into the Glutamine amidotransferase type-1 domain. The Nucleophile role is filled by cysteine 86. Residues histidine 181 and glutamate 183 contribute to the active site. The GMPS ATP-PPase domain maps to 208–400 (WTPANIVEDA…LGLPYDMVYR (193 aa)). Residue 235-241 (SGGVDSS) coordinates ATP.

Homodimer.

The catalysed reaction is XMP + L-glutamine + ATP + H2O = GMP + L-glutamate + AMP + diphosphate + 2 H(+). It functions in the pathway purine metabolism; GMP biosynthesis; GMP from XMP (L-Gln route): step 1/1. Its function is as follows. Catalyzes the synthesis of GMP from XMP. This chain is GMP synthase [glutamine-hydrolyzing], found in Cellvibrio japonicus (strain Ueda107) (Pseudomonas fluorescens subsp. cellulosa).